Reading from the N-terminus, the 215-residue chain is MQRGKFITVEGIDGAGKSTHLAWLERFLQDKGLEVVVTREPGGTALGEALRQLLLDHRQAMHPETEALLMFAARREHLDKVILPALDRGAWVVSDRFTDASFAYQGGGRGVAQSKLDNLEQWVQAELSPDLTVYFDVPVIVGRERLQSTRVADRFEMESNLFFERVRQAYLQRAEQFPQRIRVVDGSRLLAEVKTAVAEIVEDFWSDLSDTQFRG.

An ATP-binding site is contributed by glycine 11 to serine 18.

The protein belongs to the thymidylate kinase family.

It catalyses the reaction dTMP + ATP = dTDP + ADP. Phosphorylation of dTMP to form dTDP in both de novo and salvage pathways of dTTP synthesis. This Nitrosomonas europaea (strain ATCC 19718 / CIP 103999 / KCTC 2705 / NBRC 14298) protein is Thymidylate kinase.